Consider the following 276-residue polypeptide: Undecaprenyl-diphosphatase (276 aa).

A run of 7 helical transmembrane segments spans residues 1–21 (MSWL…FLPV), 39–59 (AGAS…LVYF), 84–104 (YWLG…GLLF), 115–135 (LWLV…AEYY), 188–208 (FGFL…LPDA), 222–242 (QLFV…AWFL), and 253–273 (FVGY…AGVV).

This sequence belongs to the UppP family.

It localises to the cell membrane. It carries out the reaction di-trans,octa-cis-undecaprenyl diphosphate + H2O = di-trans,octa-cis-undecaprenyl phosphate + phosphate + H(+). Functionally, catalyzes the dephosphorylation of undecaprenyl diphosphate (UPP). Confers resistance to bacitracin. In Mycolicibacterium vanbaalenii (strain DSM 7251 / JCM 13017 / BCRC 16820 / KCTC 9966 / NRRL B-24157 / PYR-1) (Mycobacterium vanbaalenii), this protein is Undecaprenyl-diphosphatase.